A 93-amino-acid chain; its full sequence is Large ribosomal subunit protein uL23 (93 aa).

It belongs to the universal ribosomal protein uL23 family. As to quaternary structure, part of the 50S ribosomal subunit. Contacts protein L29, and trigger factor when it is bound to the ribosome.

Its function is as follows. One of the early assembly proteins it binds 23S rRNA. One of the proteins that surrounds the polypeptide exit tunnel on the outside of the ribosome. Forms the main docking site for trigger factor binding to the ribosome. In Campylobacter hominis (strain ATCC BAA-381 / DSM 21671 / CCUG 45161 / LMG 19568 / NCTC 13146 / CH001A), this protein is Large ribosomal subunit protein uL23.